We begin with the raw amino-acid sequence, 120 residues long: Holo-[acyl-carrier-protein] synthase (120 aa).

Mg(2+)-binding residues include Asp6 and Glu55.

It belongs to the P-Pant transferase superfamily. AcpS family. Requires Mg(2+) as cofactor.

It localises to the cytoplasm. It catalyses the reaction apo-[ACP] + CoA = holo-[ACP] + adenosine 3',5'-bisphosphate + H(+). Its function is as follows. Transfers the 4'-phosphopantetheine moiety from coenzyme A to a Ser of acyl-carrier-protein. The polypeptide is Holo-[acyl-carrier-protein] synthase (Pelodictyon phaeoclathratiforme (strain DSM 5477 / BU-1)).